Reading from the N-terminus, the 332-residue chain is Beta-ketoacyl-[acyl-carrier-protein] synthase III (332 aa).

Residues C116 and H255 contribute to the active site. The ACP-binding stretch occupies residues Q256–R260. The active site involves N285.

The protein belongs to the thiolase-like superfamily. FabH family. In terms of assembly, homodimer.

It localises to the cytoplasm. It carries out the reaction malonyl-[ACP] + acetyl-CoA + H(+) = 3-oxobutanoyl-[ACP] + CO2 + CoA. It functions in the pathway lipid metabolism; fatty acid biosynthesis. Catalyzes the condensation reaction of fatty acid synthesis by the addition to an acyl acceptor of two carbons from malonyl-ACP. Catalyzes the first condensation reaction which initiates fatty acid synthesis and may therefore play a role in governing the total rate of fatty acid production. Possesses both acetoacetyl-ACP synthase and acetyl transacylase activities. Its substrate specificity determines the biosynthesis of branched-chain and/or straight-chain of fatty acids. The polypeptide is Beta-ketoacyl-[acyl-carrier-protein] synthase III (Helicobacter hepaticus (strain ATCC 51449 / 3B1)).